Consider the following 238-residue polypeptide: Ribonuclease-like storage protein (238 aa).

Residues 1 to 23 (MRAIYIISVIIVSLSIFSWGGNA) form the signal peptide. Position 37 (Gln37) interacts with RNA. Cys43 and Cys49 form a disulfide bridge. Residues His61, Phe109, 112 to 113 (HE), and 116 to 117 (KH) contribute to the RNA site. His61 functions as the Proton donor in the catalytic mechanism. Intrachain disulfides connect Cys76/Cys120 and Cys196/Cys207. The active site involves Glu113. His117 (proton acceptor) is an active-site residue.

This sequence belongs to the RNase T2 family. Homodimer. In terms of tissue distribution, root.

In terms of biological role, may act as a storage protein providing a nitrogen source. Seems to have no RNase activity although it has conserved the active site residues. This chain is Ribonuclease-like storage protein, found in Panax ginseng (Korean ginseng).